Reading from the N-terminus, the 142-residue chain is Transcriptional regulator MraZ (142 aa).

SpoVT-AbrB domains lie at 5–47 and 76–119; these read THTP…PTPE and AHDE…DRVA.

Belongs to the MraZ family. As to quaternary structure, forms oligomers.

The protein localises to the cytoplasm. It is found in the nucleoid. The chain is Transcriptional regulator MraZ from Salinispora tropica (strain ATCC BAA-916 / DSM 44818 / JCM 13857 / NBRC 105044 / CNB-440).